Reading from the N-terminus, the 555-residue chain is Cyclin-T1.2 (555 aa).

Disordered stretches follow at residues 315-429 (SYKG…NSSK) and 505-555 (PADS…GELV). Positions 321–335 (KPLSNSSDSPSTRPS) are enriched in low complexity. Over residues 341 to 359 (KNQKVVEQELMEQRMKEAA) the composition is skewed to basic and acidic residues. Positions 382–398 (TSSSASNNSNHQNRSSS) are enriched in low complexity. The segment covering 521–543 (PDEPSPPVSQILLPPPPPPPILP) has biased composition (pro residues).

The protein belongs to the cyclin family. Cyclin C subfamily.

Its function is as follows. Regulatory subunit of the cyclin-dependent kinase pair (CDK9/cyclin T) complex, also called positive transcription elongation factor B (P-TEFb), which is proposed to facilitate the transition from abortive to production elongation by phosphorylating the CTD (carboxy-terminal domain) of the large subunit of RNA polymerase II (RNAP II). The sequence is that of Cyclin-T1.2 (cit-1.2) from Caenorhabditis elegans.